We begin with the raw amino-acid sequence, 189 residues long: HGPRTase-like protein (189 aa).

The protein belongs to the purine/pyrimidine phosphoribosyltransferase family. Archaeal HPRT subfamily.

Its function is as follows. May catalyze a purine salvage reaction, the substrate is unknown. This chain is HGPRTase-like protein, found in Halorhabdus utahensis (strain DSM 12940 / JCM 11049 / AX-2).